The chain runs to 201 residues: Small ribosomal subunit protein uS4c (201 aa).

The segment at 15–43 (LGALPGLTSKRPRSGSDLRNQSRSGKRSQ) is disordered. One can recognise an S4 RNA-binding domain in the interval 89–150 (MRLDNILFRL…KERSRALIQN (62 aa)).

This sequence belongs to the universal ribosomal protein uS4 family. As to quaternary structure, part of the 30S ribosomal subunit. Contacts protein S5. The interaction surface between S4 and S5 is involved in control of translational fidelity.

The protein localises to the plastid. It localises to the chloroplast. Functionally, one of the primary rRNA binding proteins, it binds directly to 16S rRNA where it nucleates assembly of the body of the 30S subunit. In terms of biological role, with S5 and S12 plays an important role in translational accuracy. The sequence is that of Small ribosomal subunit protein uS4c (rps4) from Amborella trichopoda.